The following is a 210-amino-acid chain: uncharacterized protein (210 aa).

This is an uncharacterized protein from Escherichia coli (Bacteriophage T4).